We begin with the raw amino-acid sequence, 938 residues long: Isoleucine--tRNA ligase (938 aa).

The short motif at 58 to 68 is the 'HIGH' region element; it reads PYANGSIHIGH. Glu561 is an L-isoleucyl-5'-AMP binding site. The short motif at 602–606 is the 'KMSKS' region element; it reads KMSKS. ATP is bound at residue Lys605. Residues Cys901, Cys904, Cys921, and Cys924 each contribute to the Zn(2+) site.

This sequence belongs to the class-I aminoacyl-tRNA synthetase family. IleS type 1 subfamily. Monomer. It depends on Zn(2+) as a cofactor.

It localises to the cytoplasm. It carries out the reaction tRNA(Ile) + L-isoleucine + ATP = L-isoleucyl-tRNA(Ile) + AMP + diphosphate. Functionally, catalyzes the attachment of isoleucine to tRNA(Ile). As IleRS can inadvertently accommodate and process structurally similar amino acids such as valine, to avoid such errors it has two additional distinct tRNA(Ile)-dependent editing activities. One activity is designated as 'pretransfer' editing and involves the hydrolysis of activated Val-AMP. The other activity is designated 'posttransfer' editing and involves deacylation of mischarged Val-tRNA(Ile). This chain is Isoleucine--tRNA ligase, found in Sodalis glossinidius (strain morsitans).